We begin with the raw amino-acid sequence, 738 residues long: Flagellar radial spoke protein 2 (738 aa).

Arginine 104 is subject to Asymmetric dimethylarginine. Acidic residues-rich tracts occupy residues 134–153 (PDWVAPEDDEAAAVETEDEA) and 161–182 (EGEEPPPEPEPEPEAAPEDGEG). Positions 134-189 (PDWVAPEDDEAAAVETEDEAAGGAALAEGEEPPPEPEPEPEAAPEDGEGDAPAPKI) are disordered. An Asymmetric dimethylarginine modification is found at arginine 260. The interval 357–426 (AAAEAAAAAP…PPKPKKKKKV (70 aa)) is disordered. Residues 371–415 (EGEEGEGEAPPAEEEPPAEEEAEEEEEEAEEGAEEGAEEGEEGEE) show a composition bias toward acidic residues. Asymmetric dimethylarginine is present on residues arginine 453, arginine 538, and arginine 615. Residues 674 to 738 (AEAGEGEAVA…SSEESKAAAE (65 aa)) are disordered. Positions 689–730 (PAEAEAAPAEGEAAPPAEGEGEAQPAQEGSNSSSSSSDSSSS) are enriched in low complexity.

Belongs to the dpy-30 family. Post-translationally, asymmetrically dimethylated at Arg-104, Arg-260, Arg-453, Arg-538 and Arg-615 during flagellum resorption. Probably methylated by PRMT1.

It is found in the cytoplasm. Its subcellular location is the cytoskeleton. The protein localises to the flagellum axoneme. Its function is as follows. Flagellar radial spokes contribute to the regulation of dynein arm activity and thus the pattern of flagellar bending. They consist of a thin stalk, which is attached to the a subfiber of the outer doublet microtubule, and a bulbous head, which is attached to the stalk and appears to interact with the projections from the central pair of microtubules. Binds calmodulin in a calcium-dependent manner. The sequence is that of Flagellar radial spoke protein 2 from Chlamydomonas reinhardtii (Chlamydomonas smithii).